The chain runs to 4299 residues: DNA-dependent protein kinase catalytic subunit (4299 aa).

Positions 551–590 (KDLNSTIKKENNNNNNNKNKNNNNNQTLTKEEISKSIKKL) form a coiled coil. 4 disordered regions span residues 557–577 (IKKENNNNNNNKNKNNNNNQT), 613–633 (DENDNNSNSNSNNNNNNDQDN), 878–917 (NSSDSTSGGDIDIDSGGSMGGGGVVPPPSSSSRHRKMKFK), and 1206–1230 (SSSKNNSNSNSNNNNNNNNNSEDGT). Composition is skewed to low complexity over residues 562–575 (NNNNNNKNKNNNNN), 617–631 (NNSNSNSNNNNNNDQ), 878–893 (NSSDSTSGGDIDIDSG), and 1206–1226 (SSSKNNSNSNSNNNNNNNNNS). Serine 2789 is subject to Phosphoserine; by autocatalysis. 2 positions are modified to phosphothreonine; by autocatalysis: threonine 2814 and threonine 2822. Over residues 2832-2867 (SSSQSYGGTNNNTGSSQLSSSSSSSGSQSSSQNNSS) the composition is skewed to low complexity. Disordered regions lie at residues 2832-2881 (SSSQ…PKLI) and 3535-3559 (TTSSSPSLSISSSSSPYSSTSSSSQ). One can recognise an FAT domain in the interval 3031-3707 (KIKDISLNSN…YFPFKISSEQ (677 aa)). A PI3K/PI4K catalytic domain is found at 3887–4226 (FDTNVLVMGS…AKKKLELVNP (340 aa)). The tract at residues 3893 to 3899 (VMGSLRK) is G-loop. The catalytic loop stretch occupies residues 4092–4100 (GIGDRHLEN). The interval 4112–4137 (GIDFGHAFGTATQFLPIPELMPFRLT) is activation loop. The FATC domain occupies 4267-4299 (VCSSVKEQIDCLIDQSTDPNILSRAWVGWNGAL).

This sequence belongs to the PI3/PI4-kinase family. DNAPK subfamily. In terms of processing, may be phosphorylated upon DNA damage. Could be autophosphorylated. Autophosphorylation induces a conformational change that leads to remodeling of the DNA-PK complex, requisite for efficient end processing and DNA repair. Autophosphorylated on Ser-2789, Thr-2814 and Thr-2822. Ser-2789 is a DNA damage-inducible phosphorylation site (inducible with ionizing radiation, IR).

The protein localises to the nucleus. The protein resides in the nucleolus. The enzyme catalyses L-seryl-[protein] + ATP = O-phospho-L-seryl-[protein] + ADP + H(+). The catalysed reaction is L-threonyl-[protein] + ATP = O-phospho-L-threonyl-[protein] + ADP + H(+). Inhibited by wortmannin. Activity of the enzyme seems to be attenuated by autophosphorylation. In terms of biological role, serine/threonine-protein kinase that acts as a molecular sensor for DNA damage. Is recruited to DNA ends by the Ku70/Ku80 heterodimer and is involved in DNA non-homologous end joining (NHEJ) required for double-strand break (DSB) repair and V(D)J recombination. This activity is only apparent when DNA damage is administered in G1 phase of the cell cycle. Required for efficient signaling of DNA double-stranded breaks via phosphorylation of H2AX during G1. This chain is DNA-dependent protein kinase catalytic subunit (dnapkcs), found in Dictyostelium discoideum (Social amoeba).